Here is a 358-residue protein sequence, read N- to C-terminus: Peptide chain release factor 1 (358 aa).

Gln-233 bears the N5-methylglutamine mark.

It belongs to the prokaryotic/mitochondrial release factor family. In terms of processing, methylated by PrmC. Methylation increases the termination efficiency of RF1.

It is found in the cytoplasm. Peptide chain release factor 1 directs the termination of translation in response to the peptide chain termination codons UAG and UAA. This Clostridium botulinum (strain Okra / Type B1) protein is Peptide chain release factor 1.